Here is a 338-residue protein sequence, read N- to C-terminus: Ketol-acid reductoisomerase (NADP(+)) (338 aa).

Positions 1 to 181 constitute a KARI N-terminal Rossmann domain; the sequence is MKVFYDKDAD…GGGRAGIIET (181 aa). Residues 24-27, arginine 47, and serine 52 each bind NADP(+); that span reads YGSQ. Histidine 107 is a catalytic residue. Glycine 133 contacts NADP(+). Residues 182–327 enclose the KARI C-terminal knotted domain; the sequence is NFREETETDL…GKLRAMMPWI (146 aa). Mg(2+) contacts are provided by aspartate 190, glutamate 194, glutamate 226, and glutamate 230. Serine 251 lines the substrate pocket.

Belongs to the ketol-acid reductoisomerase family. Mg(2+) is required as a cofactor.

It carries out the reaction (2R)-2,3-dihydroxy-3-methylbutanoate + NADP(+) = (2S)-2-acetolactate + NADPH + H(+). The enzyme catalyses (2R,3R)-2,3-dihydroxy-3-methylpentanoate + NADP(+) = (S)-2-ethyl-2-hydroxy-3-oxobutanoate + NADPH + H(+). It functions in the pathway amino-acid biosynthesis; L-isoleucine biosynthesis; L-isoleucine from 2-oxobutanoate: step 2/4. Its pathway is amino-acid biosynthesis; L-valine biosynthesis; L-valine from pyruvate: step 2/4. In terms of biological role, involved in the biosynthesis of branched-chain amino acids (BCAA). Catalyzes an alkyl-migration followed by a ketol-acid reduction of (S)-2-acetolactate (S2AL) to yield (R)-2,3-dihydroxy-isovalerate. In the isomerase reaction, S2AL is rearranged via a Mg-dependent methyl migration to produce 3-hydroxy-3-methyl-2-ketobutyrate (HMKB). In the reductase reaction, this 2-ketoacid undergoes a metal-dependent reduction by NADPH to yield (R)-2,3-dihydroxy-isovalerate. The chain is Ketol-acid reductoisomerase (NADP(+)) from Cupriavidus metallidurans (strain ATCC 43123 / DSM 2839 / NBRC 102507 / CH34) (Ralstonia metallidurans).